Reading from the N-terminus, the 759-residue chain is 1,4-alpha-glucan branching enzyme GlgB (759 aa).

The active-site Nucleophile is aspartate 431. Glutamate 484 serves as the catalytic Proton donor.

The protein belongs to the glycosyl hydrolase 13 family. GlgB subfamily. Monomer.

The catalysed reaction is Transfers a segment of a (1-&gt;4)-alpha-D-glucan chain to a primary hydroxy group in a similar glucan chain.. It functions in the pathway glycan biosynthesis; glycogen biosynthesis. Functionally, catalyzes the formation of the alpha-1,6-glucosidic linkages in glycogen by scission of a 1,4-alpha-linked oligosaccharide from growing alpha-1,4-glucan chains and the subsequent attachment of the oligosaccharide to the alpha-1,6 position. The sequence is that of 1,4-alpha-glucan branching enzyme GlgB from Prochlorococcus marinus (strain MIT 9211).